A 497-amino-acid polypeptide reads, in one-letter code: NAD(P)H-quinone oxidoreductase subunit 2, chloroplastic (497 aa).

Helical transmembrane passes span 13 to 33, 37 to 57, 76 to 96, 103 to 123, 129 to 149, 164 to 184, 206 to 226, 240 to 260, 274 to 294, 311 to 331, 332 to 352, 373 to 393, 406 to 426, and 462 to 482; these read VILP…LDLI, SAWL…ALVF, FTIS…LIST, GMGL…GLFL, LVTV…LVGY, LLMG…LYGL, IAVW…LSAF, PTPV…ALAT, WHVL…LIAA, AGYL…GMIT, YMVT…LFGL, AFCL…AGFF, GLYL…YYYL, and VGIA…NPII.

It belongs to the complex I subunit 2 family. NDH is composed of at least 16 different subunits, 5 of which are encoded in the nucleus.

Its subcellular location is the plastid. It localises to the chloroplast thylakoid membrane. It catalyses the reaction a plastoquinone + NADH + (n+1) H(+)(in) = a plastoquinol + NAD(+) + n H(+)(out). It carries out the reaction a plastoquinone + NADPH + (n+1) H(+)(in) = a plastoquinol + NADP(+) + n H(+)(out). Functionally, NDH shuttles electrons from NAD(P)H:plastoquinone, via FMN and iron-sulfur (Fe-S) centers, to quinones in the photosynthetic chain and possibly in a chloroplast respiratory chain. The immediate electron acceptor for the enzyme in this species is believed to be plastoquinone. Couples the redox reaction to proton translocation, and thus conserves the redox energy in a proton gradient. The sequence is that of NAD(P)H-quinone oxidoreductase subunit 2, chloroplastic from Zygnema circumcarinatum (Green alga).